The following is a 146-amino-acid chain: Kappa-casein (146 aa).

O-linked (GalNAc...) threonine glycosylation is found at Thr107 and Thr112. At Ser125 the chain carries Phosphoserine; alternate. A glycan (O-linked (GalNAc...) serine; alternate) is linked at Ser125. O-linked (GalNAc...) threonine glycosylation is present at Thr142. At Ser143 the chain carries Phosphoserine.

Belongs to the kappa-casein family. As to expression, mammary gland specific. Secreted in milk.

The protein resides in the secreted. In terms of biological role, kappa-casein stabilizes micelle formation, preventing casein precipitation in milk. This is Kappa-casein (CSN3) from Tapirus indicus (Asiatic tapir).